The primary structure comprises 486 residues: Zinc finger CCCH domain-containing protein 49 (486 aa).

The segment at 157-184 (RNRAHVCSFYVRGECTRGAECPYRHEMP) adopts a C3H1-type zinc-finger fold. Positions 228–301 (RTLYIGGLDS…VRLKLMWGKP (74 aa)) constitute an RRM domain. Disordered stretches follow at residues 329 to 348 (SQQQ…QQQP) and 379 to 486 (LVES…NGMT). 2 stretches are compositionally biased toward low complexity: residues 389-407 (PGPQ…GQSY) and 415-430 (YHGG…YGGY). The segment covering 431-444 (MPPPRMPYQQPPQY) has biased composition (pro residues). Positions 445 to 486 (PAYQPMLAPPAQSQASSLQQPAPATQQLGQGPQQQTTQNGMT) are enriched in low complexity.

The chain is Zinc finger CCCH domain-containing protein 49 from Oryza sativa subsp. japonica (Rice).